Consider the following 186-residue polypeptide: Photosystem I assembly protein Ycf4 (186 aa).

Transmembrane regions (helical) follow at residues 26–46 and 66–86; these read WATIIFIGALGFLLAGLSSYF and IVMTFYGSIGVFLSLFLWLTI.

The protein belongs to the Ycf4 family.

Its subcellular location is the plastid. It localises to the chloroplast thylakoid membrane. In terms of biological role, seems to be required for the assembly of the photosystem I complex. In Pyropia yezoensis (Susabi-nori), this protein is Photosystem I assembly protein Ycf4.